Reading from the N-terminus, the 80-residue chain is Large ribosomal subunit protein eL14 (80 aa).

This sequence belongs to the eukaryotic ribosomal protein eL14 family.

In Methanocaldococcus jannaschii (strain ATCC 43067 / DSM 2661 / JAL-1 / JCM 10045 / NBRC 100440) (Methanococcus jannaschii), this protein is Large ribosomal subunit protein eL14.